Consider the following 233-residue polypeptide: Large ribosomal subunit protein uL1 (233 aa).

The protein belongs to the universal ribosomal protein uL1 family. In terms of assembly, part of the 50S ribosomal subunit.

Functionally, binds directly to 23S rRNA. The L1 stalk is quite mobile in the ribosome, and is involved in E site tRNA release. Protein L1 is also a translational repressor protein, it controls the translation of the L11 operon by binding to its mRNA. This chain is Large ribosomal subunit protein uL1, found in Geotalea daltonii (strain DSM 22248 / JCM 15807 / FRC-32) (Geobacter daltonii).